The primary structure comprises 64 residues: Alpha-toxin Ts5 (64 aa).

Residues 2 to 64 (KDGYPVEGDN…KEPTKTSGRC (63 aa)) enclose the LCN-type CS-alpha/beta domain. 4 disulfide bridges follow: Cys12/Cys64, Cys16/Cys38, Cys24/Cys44, and Cys28/Cys46.

Belongs to the long (4 C-C) scorpion toxin superfamily. Sodium channel inhibitor family. Alpha subfamily. As to expression, expressed by the venom gland.

Its subcellular location is the secreted. In terms of biological role, alpha toxins bind voltage-independently at site-3 of sodium channels (Nav) and inhibit the inactivation of the activated channels, thereby blocking neuronal transmission. By extending the depolarized period it indirectly affects beta-cell voltage-dependent potassium channels, thus increasing potassium permeability. The polypeptide is Alpha-toxin Ts5 (Tityus serrulatus (Brazilian scorpion)).